Consider the following 508-residue polypeptide: uncharacterized protein (508 aa).

In terms of domain architecture, Resolvase/invertase-type recombinase catalytic spans 3 to 163 (KAIAYMRFSS…LSWKKKRQDA (161 aa)). Catalysis depends on S11, which acts as the O-(5'-phospho-DNA)-serine intermediate. The recombinase DNA-binding region spans 175–290 (PRWLSLDDKR…QEIRLAPFGI (116 aa)).

This is an uncharacterized protein from Escherichia coli (strain K12).